The chain runs to 824 residues: Protein bicaudal D homolog 2 (824 aa).

Ser2 is modified (N-acetylserine). A coiled-coil region spans residues 20–269 (EWLRAEVKRL…ELSHYMSIND (250 aa)). Positions 25-398 (EVKRLSHELA…RLTENLSALR (374 aa)) are interacts with DYNLL1, DYNC1H1, DYNC1I2, DCTN1 and DCTN2. Ser190, Ser224, and Ser318 each carry phosphoserine. The disordered stretch occupies residues 311-330 (LPLDNKTSTPKKEGLAPPSP). Thr319 is modified (phosphothreonine). The tract at residues 334–599 (SDLLSELNIS…LLAPEAGRAD (266 aa)) is interaction with KIF5A. Positions 338 to 537 (SELNISEIQK…VTFSEELANL (200 aa)) form a coiled coil. A phosphoserine mark is found at Ser343 and Ser395. 3 disordered regions span residues 398–425 (RRLQ…GDYY), 559–622 (EGQG…DPRR), and 804–824 (EQTR…TPSL). Basic and acidic residues predominate over residues 402–422 (ASKERQTALDNEKDRDSHEDG). Residues Ser568, Ser574, and Ser582 each carry the phosphoserine modification. The interval 590–824 (LLAPEAGRAD…PKTKPATPSL (235 aa)) is interaction with RANBP2. Thr602 carries the post-translational modification Phosphothreonine. Low complexity predominate over residues 604–618 (DSSPSPGSSLPSPLS). Residues 666 to 808 (DKDKEALMEE…LELDHEQTRR (143 aa)) are a coiled coil. The tract at residues 666–814 (DKDKEALMEE…QTRRGRAKAA (149 aa)) is interacts with RAB6A. Residue Thr821 is modified to Phosphothreonine. Ser823 is modified (phosphoserine).

This sequence belongs to the BicD family. As to quaternary structure, part of a tripartite complex with dynein and dynactin, acts an adapter linking the dynein motor complex and dynactin. Interacts with CPNE4 (via VWFA domain). Interacts with RAB6A. Interacts with NEK9. Interacts with DNAI1. Interacts with DYNC1H1. Interacts with RANBP2. Binds preferentially to tyrosinated microtubules than to detyrosinated microtubules. Interacts with DYNLL1, DYNC1I2; DCTN1, DCTN2 and KIF5A. Interacts with KIF1C. In terms of processing, phosphorylated by NEK9 in vitro. As to expression, ubiquitous.

The protein localises to the golgi apparatus. Its subcellular location is the cytoplasm. The protein resides in the cytoskeleton. It is found in the nucleus envelope. It localises to the nucleus. The protein localises to the nuclear pore complex. Acts as an adapter protein linking the dynein motor complex to various cargos and converts dynein from a non-processive to a highly processive motor in the presence of dynactin. Facilitates and stabilizes the interaction between dynein and dynactin and activates dynein processivity (the ability to move along a microtubule for a long distance without falling off the track). Facilitates the binding of RAB6A to the Golgi by stabilizing its GTP-bound form. Regulates coat complex coatomer protein I (COPI)-independent Golgi-endoplasmic reticulum transport via its interaction with RAB6A and recruitment of the dynein-dynactin motor complex. Contributes to nuclear and centrosomal positioning prior to mitotic entry through regulation of both dynein and kinesin-1. During G2 phase of the cell cycle, associates with RANBP2 at the nuclear pores and recruits dynein and dynactin to the nuclear envelope to ensure proper positioning of the nucleus relative to centrosomes prior to the onset of mitosis. In Homo sapiens (Human), this protein is Protein bicaudal D homolog 2.